Consider the following 132-residue polypeptide: Small ribosomal subunit protein uS8 (132 aa).

The protein belongs to the universal ribosomal protein uS8 family. In terms of assembly, part of the 30S ribosomal subunit. Contacts proteins S5 and S12.

One of the primary rRNA binding proteins, it binds directly to 16S rRNA central domain where it helps coordinate assembly of the platform of the 30S subunit. In Xylella fastidiosa (strain 9a5c), this protein is Small ribosomal subunit protein uS8.